A 663-amino-acid polypeptide reads, in one-letter code: Sodium/potassium/calcium exchanger 1 (663 aa).

Over 32-128 (SPSAIPALLT…DLFSVEERRQ (97 aa)) the chain is Extracellular. N-linked (GlcNAc...) asparagine glycosylation is found at asparagine 59, asparagine 66, and asparagine 100. Residues 129–149 (GWVVLHIFGMMYVFVALAIVC) traverse the membrane as a helical segment. The Cytoplasmic portion of the chain corresponds to 150-173 (DEYFVPALGVITEKLQISEDVAGA). The Alpha-1 repeat unit spans residues 170-210 (VAGATFMAAGGSAPELFTSLIGVFISHSNVGIGTIVGSAVF). The chain crosses the membrane as a helical span at residues 174–194 (TFMAAGGSAPELFTSLIGVFI). Residues 195–200 (SHSNVG) lie on the Extracellular side of the membrane. The chain crosses the membrane as a helical span at residues 201 to 221 (IGTIVGSAVFNILFVIGTCAL). Residues 222-228 (FSREILH) are Cytoplasmic-facing. A helical membrane pass occupies residues 229 to 253 (LTWWPLFRDISFYIVDLLMLILFFL). Topologically, residues 254–259 (DSVIDW) are extracellular. A helical membrane pass occupies residues 260–276 (WESLLLLTAYATYVFTM). The Cytoplasmic portion of the chain corresponds to 277 to 471 (KHNVSLEQWV…SLEWPETRKK (195 aa)). Disordered stretches follow at residues 308–343 (KSSV…SLHN) and 384–465 (LTGQ…SLEW). Residues 316 to 325 (DGTKPADGKK) show a composition bias toward basic and acidic residues. Polar residues-rich tracts occupy residues 327 to 343 (QPTT…SLHN) and 399 to 412 (ASQN…ASDS). Phosphoserine is present on serine 337. The segment covering 413-423 (EPSKDKQKEDT) has biased composition (basic and acidic residues). The span at 434–461 (DNSEDSSSDSEDDSDDDSTDDEENDEPL) shows a compositional bias: acidic residues. A helical membrane pass occupies residues 472–492 (QAIYLFLFPIVFPLWSTIPDV). Residues 493–499 (RNPDSKK) are Extracellular-facing. Residues 500 to 520 (FFVITFFGSIIWIAAFSYLMV) traverse the membrane as a helical segment. The Cytoplasmic portion of the chain corresponds to 521–535 (WWAHQVGETIGISEE). The chain crosses the membrane as a helical span at residues 536–556 (IMGLTILAAGTSIPDLITSVI). Residues 543-574 (AAGTSIPDLITSVIVARKGLGDMAVSSSVGSN) form an Alpha-2 repeat. The Extracellular portion of the chain corresponds to 557–574 (VARKGLGDMAVSSSVGSN). Residues 575–595 (IFDITVGLPVPWFLYSVFNGF) traverse the membrane as a helical segment. Over 596–604 (SPVAVSSNG) the chain is Cytoplasmic. Residues 605–625 (LFCAIVLLFLMLLFVIISIAL) form a helical membrane-spanning segment. At 626 to 632 (CKWKMNK) the chain is on the extracellular side. The helical transmembrane segment at 633–653 (ILGVTMFALYFVFLIISVMLE) threads the bilayer. Residues 654–663 (DRIISCPVSV) are Cytoplasmic-facing.

This sequence belongs to the Ca(2+):cation antiporter (CaCA) (TC 2.A.19) family. SLC24A subfamily. In terms of processing, the uncleaved signal sequence is required for efficient membrane targeting and proper membrane integration and topology. In terms of tissue distribution, retinal rods. Localizes to the inner segment of rod photoreceptors.

Its subcellular location is the cell membrane. The catalysed reaction is Ca(2+)(out) + K(+)(out) + 4 Na(+)(in) = Ca(2+)(in) + K(+)(in) + 4 Na(+)(out). Calcium, potassium:sodium antiporter that transports 1 Ca(2+) and 1 K(+) in exchange for 4 Na(+). Critical component of the visual transduction cascade, controlling the calcium concentration of outer segments during light and darkness. Light causes a rapid lowering of cytosolic free calcium in the outer segment of both retinal rod and cone photoreceptors and the light-induced lowering of calcium is caused by extrusion via this protein which plays a key role in the process of light adaptation. This Gallus gallus (Chicken) protein is Sodium/potassium/calcium exchanger 1 (SLC24A1).